We begin with the raw amino-acid sequence, 270 residues long: tRNA pseudouridine synthase A (270 aa).

D51 (nucleophile) is an active-site residue. Substrate is bound at residue Y109.

The protein belongs to the tRNA pseudouridine synthase TruA family. Homodimer.

It carries out the reaction uridine(38/39/40) in tRNA = pseudouridine(38/39/40) in tRNA. Its function is as follows. Formation of pseudouridine at positions 38, 39 and 40 in the anticodon stem and loop of transfer RNAs. The chain is tRNA pseudouridine synthase A from Burkholderia mallei (strain ATCC 23344).